Reading from the N-terminus, the 716-residue chain is 1,4-alpha-glucan branching enzyme GlgB (716 aa).

Residue Asp398 is the Nucleophile of the active site. Glu451 functions as the Proton donor in the catalytic mechanism.

It belongs to the glycosyl hydrolase 13 family. GlgB subfamily. Monomer.

The catalysed reaction is Transfers a segment of a (1-&gt;4)-alpha-D-glucan chain to a primary hydroxy group in a similar glucan chain.. The protein operates within glycan biosynthesis; glycogen biosynthesis. Functionally, catalyzes the formation of the alpha-1,6-glucosidic linkages in glycogen by scission of a 1,4-alpha-linked oligosaccharide from growing alpha-1,4-glucan chains and the subsequent attachment of the oligosaccharide to the alpha-1,6 position. The polypeptide is 1,4-alpha-glucan branching enzyme GlgB (Nitrobacter hamburgensis (strain DSM 10229 / NCIMB 13809 / X14)).